Consider the following 329-residue polypeptide: Prostaglandin reductase 1 (329 aa).

Thr18 carries the phosphothreonine modification. NADP(+)-binding positions include 152–155 (GAVG), Lys178, Tyr193, Asn217, 239–245 (CGAISQY), 270–272 (FIV), and Asn321. At Lys178 the chain carries N6-(2-hydroxyisobutyryl)lysine; alternate. An N6-acetyllysine; alternate modification is found at Lys178.

Belongs to the NADP-dependent oxidoreductase L4BD family. In terms of assembly, monomer or homodimer.

It localises to the cytoplasm. The enzyme catalyses 13,14-dihydro-15-oxo-prostaglandin E1 + NADP(+) = 15-oxoprostaglandin E1 + NADPH + H(+). The catalysed reaction is 13,14-dihydro-15-oxo-prostaglandin E2 + NADP(+) = 15-oxoprostaglandin E2 + NADPH + H(+). It carries out the reaction 13,14-dihydro-15-oxo-prostaglandin F1alpha + NADP(+) = 15-oxoprostaglandin F1alpha + NADPH + H(+). It catalyses the reaction 13,14-dihydro-15-oxo-PGF2alpha + NADP(+) = 15-oxoprostaglandin F2alpha + NADPH + H(+). The enzyme catalyses leukotriene B4 + NADP(+) = 12-oxo-leukotriene B4 + NADPH + H(+). The catalysed reaction is 20-hydroxy-leukotriene B4 + NADP(+) = 12-oxo-20-hydroxy-leukotriene B4 + NADPH + H(+). It carries out the reaction 6-trans-leukotriene B4 + NADP(+) = 12-oxo-(5S)-hydroxy-(6E,8E,10E,14Z)-eicosatetraenoate + NADPH + H(+). It catalyses the reaction (5S,12S)-dihydroxy-(6E,10E,12E,14Z)-eicosatetraenoate + NADP(+) = 12-oxo-(5S)-hydroxy-(6E,8E,10E,14Z)-eicosatetraenoate + NADPH + H(+). The enzyme catalyses an n-alkanal + NADP(+) = an alk-2-enal + NADPH + H(+). The catalysed reaction is hexanal + NADP(+) = (E)-hex-2-enal + NADPH + H(+). It carries out the reaction octanal + NADP(+) = (2E)-octenal + NADPH + H(+). It catalyses the reaction decanal + NADP(+) = (2E)-decenal + NADPH + H(+). The enzyme catalyses dodecanal + NADP(+) = (2E)-dodecenal + NADPH + H(+). The catalysed reaction is 4-hydroxynonanal + NADP(+) = (E)-4-hydroxynon-2-enal + NADPH + H(+). It carries out the reaction pentan-2-one + NADP(+) = (E)-pent-3-en-2-one + NADPH + H(+). It catalyses the reaction nonan-2-one + NADP(+) = (3E)-nonen-2-one + NADPH + H(+). Functionally, NAD(P)H-dependent oxidoreductase involved in metabolic inactivation of pro- and anti-inflammatory eicosanoids: prostaglandins (PG), leukotrienes (LT) and lipoxins (LX). Catalyzes with high efficiency the reduction of the 13,14 double bond of 15-oxoPGs, including 15-oxo-PGE1, 15-oxo-PGE2, 15-oxo-PGF1-alpha and 15-oxo-PGF2-alpha. Catalyzes with lower efficiency the oxidation of the hydroxyl group at C12 of LTB4 and its derivatives, converting them into biologically less active 12-oxo-LTB4 metabolites. Reduces 15-oxo-LXA4 to 13,14 dihydro-15-oxo-LXA4, enhancing neutrophil recruitment at the inflammatory site. Plays a role in metabolic detoxification of alkenals and ketones. Reduces alpha,beta-unsaturated alkenals and ketones, particularly those with medium-chain length, showing highest affinity toward (2E)-decenal and (3E)-3-nonen-2-one. May inactivate 4-hydroxy-2-nonenal, a cytotoxic lipid constituent of oxidized low-density lipoprotein particles. This chain is Prostaglandin reductase 1 (Ptgr1), found in Mus musculus (Mouse).